The following is a 73-amino-acid chain: UPF0154 protein MG335.1 (73 aa).

Residues 6–26 traverse the membrane as a helical segment; it reads LALGLGIPLSLLVGMILGYFI.

It belongs to the UPF0154 family.

The protein resides in the membrane. The protein is UPF0154 protein MG335.1 of Mycoplasma genitalium (strain ATCC 33530 / DSM 19775 / NCTC 10195 / G37) (Mycoplasmoides genitalium).